Consider the following 186-residue polypeptide: Homeobox expressed in ES cells 1 (186 aa).

Residues 109-168 (GRRPRTAFTRSQIEILENVFRVNSYPGIDIREELAGKLALDEDRIQIWFQNRRAKLKRSH) constitute a DNA-binding region (homeobox).

This sequence belongs to the ANF homeobox family. As to quaternary structure, interacts (via N-terminus) with zyx.

Its subcellular location is the nucleus. Regulates the earliest stages of development of the anterior neural plate. Plays a role in forebrain development by inhibiting the expression of otx2 and pax6 in the rostral region of the anterior neural plate. Necessary for both neural differentiation and neural patterning. Controls Spemann organizer development. May act as a transcriptional repressor. The chain is Homeobox expressed in ES cells 1 from Xenopus tropicalis (Western clawed frog).